The chain runs to 373 residues: Structure-specific endonuclease subunit EME2 (373 aa).

Residues 24-52 (RPQTWEISDSDGEGVPAREVGTQAPSPAG) are disordered. The tract at residues 47-260 (APSPAGERRA…LPSKQHRDSQ (214 aa)) is nuclease-like domain; forms the post-nick DNA binding interface and is involved in DNA recognition and bending. Residues 282 to 373 (GLRGVWWRQI…NPDLLLDLSS (92 aa)) form a helix-hairpin-helix (2HhH); forms the pre-nick DNA binding interface and is involved in DNA recognition and bending region.

It belongs to the EME1/MMS4 family. Part of the heterodimeric MUS81-EME2 complex; the complex forms specifically during the DNA replication phase of the cell cycle.

The protein localises to the nucleus. Its function is as follows. Non-catalytic subunit of the structure-specific, heterodimeric DNA endonuclease MUS81-EME2 which is involved in the maintenance of genome stability. In the complex, EME2 is required for DNA cleavage, participating in DNA recognition and bending. MUS81-EME2 cleaves 3'-flaps and nicked Holliday junctions, and exhibit limited endonuclease activity with 5' flaps and nicked double-stranded DNAs. MUS81-EME2 which is active during the replication of DNA is more specifically involved in replication fork processing. Replication forks frequently encounter obstacles to their passage, including DNA base lesions, DNA interstrand cross-links, difficult-to-replicate sequences, transcription bubbles, or tightly bound proteins. One mechanism for the restart of a stalled replication fork involves nucleolytic cleavage mediated by the MUS81-EME2 endonuclease. By acting upon the stalled fork, MUS81-EME2 generates a DNA double-strand break (DSB) that can be repaired by homologous recombination, leading to the restoration of an active fork. MUS81-EME2 could also function in telomere maintenance. This Mus musculus (Mouse) protein is Structure-specific endonuclease subunit EME2.